A 66-amino-acid polypeptide reads, in one-letter code: Large ribosomal subunit protein bL35 (66 aa).

Belongs to the bacterial ribosomal protein bL35 family.

This is Large ribosomal subunit protein bL35 from Synechococcus sp. (strain ATCC 27144 / PCC 6301 / SAUG 1402/1) (Anacystis nidulans).